A 1036-amino-acid chain; its full sequence is Cysteine-rich motor neuron 1 protein (1036 aa).

The first 34 residues, 1–34, serve as a signal peptide directing secretion; that stretch reads MYLVAGDRGLAGCGHLLVSLLGLLLLLARSGTRA. The region spanning 35–112 is the IGFBP N-terminal domain; it reads LVCLPCDESK…EYEAGVCEDE (78 aa). At 35–939 the chain is on the extracellular side; the sequence is LVCLPCDESK…HPSEDSSLDS (905 aa). 4 disulfide bridges follow: Cys-37/Cys-60, Cys-40/Cys-62, Cys-45/Cys-63, and Cys-51/Cys-66. Residue Asn-71 is glycosylated (N-linked (GlcNAc...) asparagine). 2 cysteine pairs are disulfide-bonded: Cys-74-Cys-90 and Cys-84-Cys-109. N-linked (GlcNAc...) asparagine glycosylation is present at Asn-113. Positions 314–316 match the Cell attachment site motif; that stretch reads RGD. N-linked (GlcNAc...) asparagine glycosylation is present at Asn-330. VWFC domains follow at residues 334 to 391 and 401 to 457; these read PACV…PVCE and AGCY…PVCE. Antistasin-like domains follow at residues 469 to 498, 505 to 532, 539 to 564, and 567 to 592; these read CGEL…TCQC, CSER…ICEC, CRPI…ICRC, and CPEL…ICKC. Asn-474 is a glycosylation site (N-linked (GlcNAc...) asparagine). 2 consecutive VWFC domains span residues 606-663 and 677-735; these read GTCL…PSCA and SICH…PQCT. Asn-746 carries N-linked (GlcNAc...) asparagine glycosylation. VWFC domains follow at residues 751 to 809 and 817 to 874; these read NYCK…PYCI and VVCH…PMCP. A helical transmembrane segment spans residues 940-960; sequence IASVVVPIIICLSIIIAFLFI. Residues 961–1036 are Cytoplasmic-facing; that stretch reads NQKKQWIPLL…LQADNFYQTV (76 aa). Position 1035 is a phosphothreonine (Thr-1035).

In terms of assembly, interacts with BMP4 and BMP7. In terms of processing, N-glycosylated. In terms of tissue distribution, expressed in pancreas, kidney, skeletal muscle, lung, placenta, brain, heart, spleen, liver and small intestine. Expressed in blood vessels (at protein level).

The protein resides in the secreted. The protein localises to the cell membrane. Functionally, may play a role in CNS development by interacting with growth factors implicated in motor neuron differentiation and survival. May play a role in capillary formation and maintenance during angiogenesis. Modulates BMP activity by affecting its processing and delivery to the cell surface. This chain is Cysteine-rich motor neuron 1 protein (CRIM1), found in Homo sapiens (Human).